The primary structure comprises 181 residues: Probable N-acetyltransferase YjcK (181 aa).

One can recognise an N-acetyltransferase domain in the interval 7 to 172 (IYVRPLEVTD…NGVWEDHQVL (166 aa)).

This sequence belongs to the acetyltransferase family. RimJ subfamily.

It catalyses the reaction an N-terminal L-alpha-aminoacyl-[protein] + acetyl-CoA = N-terminal N(alpha)-acetyl-L-alpha-aminoacyl-[protein] + CoA + H(+). In terms of biological role, probable N-terminal protein acetyltransferase. This Bacillus subtilis (strain 168) protein is Probable N-acetyltransferase YjcK (yjcK).